Consider the following 66-residue polypeptide: Alpha-conotoxin-like Tx2 (66 aa).

Positions 1–21 (MGMRMMFTVFLLVVLATTVVS) are cleaved as a signal peptide. The propeptide occupies 22–49 (FTSGRRTFHGRNAAAKASGLVSLTDRRP). Cystine bridges form between cysteine 51–cysteine 57 and cysteine 52–cysteine 65. The interval 53–55 (SHP) is ser-Xaa-Pro motif, crucial for potent interaction with nAChR.

The protein belongs to the conotoxin A superfamily. Expressed by the venom duct.

The protein localises to the secreted. In terms of biological role, alpha-conotoxins act on postsynaptic membranes, they bind to the nicotinic acetylcholine receptors (nAChR) and thus inhibit them. This chain is Alpha-conotoxin-like Tx2, found in Conus textile (Cloth-of-gold cone).